Reading from the N-terminus, the 123-residue chain is Small ribosomal subunit protein uS12 (123 aa).

The residue at position 89 (aspartate 89) is a 3-methylthioaspartic acid.

It belongs to the universal ribosomal protein uS12 family. In terms of assembly, part of the 30S ribosomal subunit. Contacts proteins S8 and S17. May interact with IF1 in the 30S initiation complex.

With S4 and S5 plays an important role in translational accuracy. Its function is as follows. Interacts with and stabilizes bases of the 16S rRNA that are involved in tRNA selection in the A site and with the mRNA backbone. Located at the interface of the 30S and 50S subunits, it traverses the body of the 30S subunit contacting proteins on the other side and probably holding the rRNA structure together. The combined cluster of proteins S8, S12 and S17 appears to hold together the shoulder and platform of the 30S subunit. This chain is Small ribosomal subunit protein uS12, found in Rhodopseudomonas palustris (strain BisA53).